Consider the following 462-residue polypeptide: Gastric inhibitory polypeptide receptor (462 aa).

The signal sequence occupies residues 1 to 18 (MPLRPRLLLLCLWGLLLQ). At 19–135 (QAETDSEGQT…DQRLILERLQ (117 aa)) the chain is on the extracellular side. Intrachain disulfides connect Cys43–Cys67, Cys58–Cys100, and Cys81–Cys115. 2 N-linked (GlcNAc...) asparagine glycosylation sites follow: Asn59 and Asn74. The helical transmembrane segment at 136 to 158 (VVYTVGYSLSLGTLLLALLILSL) threads the bilayer. The Cytoplasmic portion of the chain corresponds to 159–166 (FRRLHCTR). The chain crosses the membrane as a helical span at residues 167–186 (NYIHMNVFLSFMLRAVAILT). Over 187-214 (RDRLLPTLGPYPGDRTLTLRNQALAACR) the chain is Extracellular. Residues 215 to 239 (TAQIVTQYCVGANYTWLLVEGVYLH) traverse the membrane as a helical segment. Residues 240-251 (HLLVIVGGSEKG) are Cytoplasmic-facing. The chain crosses the membrane as a helical span at residues 252-275 (HFRCYLLLGWGAPALFVIPWVIVR). The Extracellular segment spans residues 276–290 (YLLENTQCWERNEVK). The chain crosses the membrane as a helical span at residues 291-316 (AIWWIIRTPILITILINFFIFIRILG). At 317-338 (ILVSKLRTRQMRCPDYRLRLAR) the chain is on the cytoplasmic side. The chain crosses the membrane as a helical span at residues 339–359 (STLTLVPLLGVHEVVFAPVTE). Topologically, residues 360–374 (EQAEGTLRFAKLAFE) are extracellular. Residues 375-395 (IFLSSFQGFLVSVLYCFINKE) form a helical membrane-spanning segment. Residues 396-462 (VQSEIRRSWR…PGEEVLESYC (67 aa)) lie on the Cytoplasmic side of the membrane. Positions 421–462 (HAELGPQALPSRSAPREVPITGSTLPSGPLHGPGEEVLESYC) are disordered.

This sequence belongs to the G-protein coupled receptor 2 family. As to quaternary structure, may form homodimers and heterodimers with GLP1R. Post-translationally, N-glycosylation is required for cell surface expression and lengthens receptor half-life by preventing degradation in the ER. As to expression, widely distributed including pancreatic islets, brain and various peripheral tissues.

It is found in the cell membrane. In terms of biological role, this is a receptor for GIP. The activity of this receptor is mediated by G proteins which activate adenylyl cyclase. This chain is Gastric inhibitory polypeptide receptor (GIPR), found in Mesocricetus auratus (Golden hamster).